The following is a 364-amino-acid chain: Methylthioribose-1-phosphate isomerase (364 aa).

Substrate contacts are provided by residues 53 to 55 (RGA), Arg-90, and Gln-203. The active-site Proton donor is the Asp-244. Residue 254 to 255 (NK) participates in substrate binding.

It belongs to the eIF-2B alpha/beta/delta subunits family. MtnA subfamily.

The catalysed reaction is 5-(methylsulfanyl)-alpha-D-ribose 1-phosphate = 5-(methylsulfanyl)-D-ribulose 1-phosphate. It functions in the pathway amino-acid biosynthesis; L-methionine biosynthesis via salvage pathway; L-methionine from S-methyl-5-thio-alpha-D-ribose 1-phosphate: step 1/6. In terms of biological role, catalyzes the interconversion of methylthioribose-1-phosphate (MTR-1-P) into methylthioribulose-1-phosphate (MTRu-1-P). This chain is Methylthioribose-1-phosphate isomerase, found in Sinorhizobium medicae (strain WSM419) (Ensifer medicae).